The chain runs to 399 residues: UDP-N-acetylglucosamine--N-acetylmuramyl-(pentapeptide) pyrophosphoryl-undecaprenol N-acetylglucosamine transferase (399 aa).

The interval 1–31 is disordered; that stretch reads MTSRFGHSQHPRRGRSARARAGRREGVQSNF. Residues 7-21 show a composition bias toward basic residues; sequence HSQHPRRGRSARARA. UDP-N-acetyl-alpha-D-glucosamine contacts are provided by residues 58–60, N170, R206, S234, I288, and Q333; that span reads TGG.

This sequence belongs to the glycosyltransferase 28 family. MurG subfamily.

Its subcellular location is the cell inner membrane. The catalysed reaction is di-trans,octa-cis-undecaprenyl diphospho-N-acetyl-alpha-D-muramoyl-L-alanyl-D-glutamyl-meso-2,6-diaminopimeloyl-D-alanyl-D-alanine + UDP-N-acetyl-alpha-D-glucosamine = di-trans,octa-cis-undecaprenyl diphospho-[N-acetyl-alpha-D-glucosaminyl-(1-&gt;4)]-N-acetyl-alpha-D-muramoyl-L-alanyl-D-glutamyl-meso-2,6-diaminopimeloyl-D-alanyl-D-alanine + UDP + H(+). It functions in the pathway cell wall biogenesis; peptidoglycan biosynthesis. Cell wall formation. Catalyzes the transfer of a GlcNAc subunit on undecaprenyl-pyrophosphoryl-MurNAc-pentapeptide (lipid intermediate I) to form undecaprenyl-pyrophosphoryl-MurNAc-(pentapeptide)GlcNAc (lipid intermediate II). This chain is UDP-N-acetylglucosamine--N-acetylmuramyl-(pentapeptide) pyrophosphoryl-undecaprenol N-acetylglucosamine transferase, found in Acidovorax sp. (strain JS42).